The following is a 1337-amino-acid chain: Nucleoporin POM152 (1337 aa).

Residues 1 to 48 (MEHRYNVFNDTPRGNHWMGSSVSGSPRPSYSSRPNVNTTRRFQYSDDE) are disordered. The Cytoplasmic portion of the chain corresponds to 1 to 110 (MEHRYNVFND…TDVLEISKQR (110 aa)). The pore side stretch occupies residues 1–175 (MEHRYNVFND…SFNIPRLTFK (175 aa)). Over residues 19–37 (GSSVSGSPRPSYSSRPNVN) the composition is skewed to low complexity. 2 positions are modified to phosphoserine: Ser-45 and Ser-60. Residues 111–131 (TFAVILFLIIQCYKIYDLVIL) form a helical membrane-spanning segment. Over 132–148 (KSGLPLSGLLFKNYRFN) the chain is Perinuclear space. The chain crosses the membrane as a helical span at residues 149–169 (FISKYFIIDSFFLYVLPSFNI). Topologically, residues 170–172 (PRL) are cytoplasmic. A helical membrane pass occupies residues 173–193 (TFKPWVVYLQILAMLLLNIFI). The Perinuclear space segment spans residues 194–1337 (SSDHEFVLIS…FAKNDLFFNN (1144 aa)). The segment at 196–1337 (DHEFVLISLI…FAKNDLFFNN (1142 aa)) is cisternal side. N-linked (GlcNAc...) asparagine glycosylation occurs at Asn-280. 8 repeat units span residues 390–413 (DRCI…KLAY), 626–650 (DQCV…YYNT), 732–755 (KLCL…TLTY), 836–859 (KIKH…TVKF), 943–966 (EVCQ…ILEY), 1058–1077 (FLEP…SITF), 1157–1178 (EYCV…MIKY), and 1253–1276 (DIRE…SLTY). An 8 X 24 AA approximate repeats region spans residues 390–1276 (DRCIGDSDNV…EGTPPFSLTY (887 aa)).

As to quaternary structure, component of the nuclear pore complex (NPC). NPC constitutes the exclusive means of nucleocytoplasmic transport. NPCs allow the passive diffusion of ions and small molecules and the active, nuclear transport receptor-mediated bidirectional transport of macromolecules such as proteins, RNAs, ribonucleoparticles (RNPs), and ribosomal subunits across the nuclear envelope. Due to its 8-fold rotational symmetry, all subunits are present with 8 copies or multiples thereof. Interacts with NUP188. Post-translationally, the N-terminus is blocked. In terms of processing, phosphorylated by CDC28.

The protein resides in the nucleus. It localises to the nuclear pore complex. The protein localises to the nucleus membrane. Its function is as follows. Functions as a component of the nuclear pore complex (NPC). NPC components, collectively referred to as nucleoporins (NUPs), can play the role of both NPC structural components and of docking or interaction partners for transiently associated nuclear transport factors. POM152 is important for the de novo assembly of NPCs. The protein is Nucleoporin POM152 (POM152) of Saccharomyces cerevisiae (strain ATCC 204508 / S288c) (Baker's yeast).